The chain runs to 408 residues: Aminoacylase-1 (408 aa).

His80 contacts Zn(2+). The active site involves Asp82. Asp113 provides a ligand contact to Zn(2+). Glu147 functions as the Proton acceptor in the catalytic mechanism. Zn(2+) is bound by residues Glu148, Glu175, and His373.

Belongs to the peptidase M20A family. In terms of assembly, homodimer. Interacts with SPHK1. The cofactor is Zn(2+). As to expression, expression is highest in kidney, strong in brain and weaker in placenta and spleen.

It is found in the cytoplasm. The catalysed reaction is an N-acyl-L-amino acid + H2O = an L-alpha-amino acid + a carboxylate. The enzyme catalyses N-acetyl-L-methionine + H2O = L-methionine + acetate. It carries out the reaction N-acetyl-L-glutamine + H2O = L-glutamine + acetate. Its function is as follows. Catalyzes the hydrolysis of N-acetylated amino acids to acetate and free amino acids. The protein is Aminoacylase-1 (ACY1) of Homo sapiens (Human).